A 2776-amino-acid polypeptide reads, in one-letter code: A-kinase anchor protein 13 (2776 aa).

Disordered stretches follow at residues 371–401, 452–518, 547–584, 618–641, 653–689, 760–871, 910–951, 995–1029, 1431–1508, 1527–1546, and 1565–1603; these read KNKDVGRKGEEAEPASAMDSGSASHQDSCLQ, EPDA…TETT, PAEASPALSSEEIPTEKPGMETQERGCEGGTTSDQSSP, TMPGPSSDGMPEQNSESHARPAQS, EAGTPSAEATHQPSTVTSSGRLEECGSGKASLPESTM, VSQT…SPTA, ALGQ…IPGL, GAAKSLVPPRTSLSADSKQKASSTEQSGSSLLPSG, LCDT…MDSI, PFRRHSWGPGKNAASDAEMN, and RRSFSLEGLTGGGVGNKPSSSLEMSSANSSELRNPFGGE. A compositionally biased stretch (polar residues) spans 389–401; it reads DSGSASHQDSCLQ. An important for interaction with PRKAR2A region spans residues 493–515; it reads QNNKPQVGEGTKERLENSDSSTT. Basic and acidic residues predominate over residues 560-573; that stretch reads PTEKPGMETQERGC. Positions 659–672 are enriched in polar residues; the sequence is AEATHQPSTVTSSG. Low complexity predominate over residues 773-788; that stretch reads SPPASSFSLASSPESE. Residue Ser784 is modified to Phosphoserine. Position 809 is a phosphothreonine (Thr809). 2 stretches are compositionally biased toward basic and acidic residues: residues 820-834 and 914-940; these read DGPDGRDLSDTDKVG and DGKDRAMSCSSVKEDVHSSEMSREDQR. The residue at position 941 (Thr941) is a Phosphothreonine. Residues 1005 to 1020 are compositionally biased toward polar residues; sequence TSLSADSKQKASSTEQ. The segment covering 1433-1444 has biased composition (low complexity); that stretch reads DTTGSSSSTDDT. A compositionally biased stretch (polar residues) spans 1454–1476; sequence GSDVSLPQTSKLNRSRNHQSANG. Phosphoserine occurs at positions 1455, 1473, 1507, 1532, and 1569. The segment at 1552–1678 is important for interaction with MAP2K3; the sequence is RALGHVVRRP…SRPFHSTSAN (127 aa). The segment covering 1583–1594 has biased composition (low complexity); the sequence is SSSLEMSSANSS. Phosphoserine is present on residues Ser1608, Ser1611, and Ser1613. Lys1637 is modified (N6-methyllysine). Residues 1711–1756 form a disordered region; it reads TFSYIRNKMSSSKKSKEKEKEKDKIKEKEKDSKEKEKDKKTLNGHT. Over residues 1724–1751 the composition is skewed to basic and acidic residues; that stretch reads KSKEKEKEKDKIKEKEKDSKEKEKDKKT. Residues 1754-1801 form a Phorbol-ester/DAG-type zinc finger; it reads GHTFSPIPIVGPISCSQCMKPFTNKDAYTCAGCGAFVHKGCRENLASC. A phosphoserine mark is found at Ser1839, Ser1858, and Ser1892. Residues 1882–2776 form an interaction with ESR1 region; that stretch reads MSNTWKFLSH…VPAEGEEIFC (895 aa). Thr1893 is modified (phosphothreonine). Residues Ser1895 and Ser1908 each carry the phosphoserine modification. Residues 1957 to 2154 form the DH domain; sequence KRQEVIYELM…KDVIGAVDSK (198 aa). In terms of domain architecture, PH spans 2194 to 2296; that stretch reads KLVRDGSVFL…WIQIIQDTIN (103 aa). Residues Ser2308 and Ser2361 each carry the phosphoserine modification. Residues 2308-2345 are a coiled coil; that stretch reads SENEEEKKLLDTKARELKEQLQQKDQQILLLLEEKEMI. Phosphothreonine is present on Thr2431. Positions 2436-2471 are disordered; sequence DCHQMNASKGGEKEEGDDGQDLRRTESDSGLKKGGN. Over residues 2455–2466 the composition is skewed to basic and acidic residues; that stretch reads QDLRRTESDSGL. Phosphoserine is present on residues Ser2527 and Ser2530. A coiled-coil region spans residues 2532–2646; the sequence is LIEQEKQRSL…ERLSQRQMDQ (115 aa). Disordered stretches follow at residues 2549–2605 and 2626–2776; these read ANLQ…EELQ and EREQ…EIFC. Composition is skewed to basic and acidic residues over residues 2558-2605 and 2626-2640; these read HLEE…EELQ and EREQEQLRRDTERLS. Composition is skewed to polar residues over residues 2641-2653, 2665-2700, and 2713-2727; these read QRQMDQNLCQVSN, LPNSDEFSSPSAPSVTKSGSLDSELSVSPKRNSISR, and SASQTKVPEGQSQAP. Phosphoserine is present on residues Ser2673 and Ser2692.

As to quaternary structure, interacts with the cAMP-dependent protein kinase (PKA) holoenzyme and with the regulatory subunit PRKAR2A. Interacts with RHOA. Also interacts with RHOB and RHOC. Identified in a ternary complex with RHOA and PRKAR2A. Identified in a complex with NR3C1 and RHOA. Interacts with BRAF and KSR1. Identified in a complex with BRAF and KSR1. Component of a signaling complex containing at least AKAP13, PKN1, MAPK14, ZAK and MAP2K3. Within this complex, AKAP13 interacts directly with PKN1, which in turn recruits MAPK14, MAP2K3 and ZAK. Interacts (phosphorylated form) with YWHAB and YWHAZ. Interaction with YWHAB inhibits activation of RHOA, interferes with PKN1 binding and activation of MAP kinases. Interacts with GNA12. Interacts with IKBKB. Interacts with ESR1, THRA, PPARA and NME2. Interacts (via the C-terminal domain after the PH domain) with MEF2C and RXRB. Interacts (via the C-terminal domain after the PH domain) with PRKD1. In terms of tissue distribution, detected in embryonic heart, limb bud, first branchial arch and forebrain (at protein level). Detected in heart. Detected in perichondrium, but not in the bone growth plate.

Its subcellular location is the cytoplasm. The protein resides in the cytosol. It localises to the cell cortex. The protein localises to the cytoskeleton. It is found in the nucleus. Its subcellular location is the membrane. Its function is as follows. Scaffold protein that plays an important role in assembling signaling complexes downstream of several types of G protein-coupled receptors. Activates RHOA in response to signaling via G protein-coupled receptors via its function as Rho guanine nucleotide exchange factor. May also activate other Rho family members. Part of a kinase signaling complex that links ADRA1A and ADRA1B adrenergic receptor signaling to the activation of downstream p38 MAP kinases, such as MAPK11 and MAPK14. Part of a signaling complex that links ADRA1B signaling to the activation of RHOA and IKBKB/IKKB, leading to increased NF-kappa-B transcriptional activity. Part of a RHOA-dependent signaling cascade that mediates responses to lysophosphatidic acid (LPA), a signaling molecule that activates G-protein coupled receptors and potentiates transcriptional activation of the glucocorticoid receptor NR3C1. Part of a signaling cascade that stimulates MEF2C-dependent gene expression in response to lysophosphatidic acid (LPA). Part of a signaling pathway that activates MAPK11 and/or MAPK14 and leads to increased transcription activation of the estrogen receptors ESR1 and ESR2. Part of a signaling cascade that links cAMP and EGFR signaling to BRAF signaling and to PKA-mediated phosphorylation of KSR1, leading to the activation of downstream MAP kinases, such as MAPK1 or MAPK3. Functions as a scaffold protein that anchors cAMP-dependent protein kinase (PKA) and PRKD1. This promotes activation of PRKD1, leading to increased phosphorylation of HDAC5 and ultimately cardiomyocyte hypertrophy. Has no guanine nucleotide exchange activity on CDC42, Ras or Rac. Required for normal embryonic heart development, and in particular for normal sarcomere formation in the developing cardiomyocytes. Plays a role in cardiomyocyte growth and cardiac hypertrophy in response to activation of the beta-adrenergic receptor by phenylephrine or isoproterenol. Required for normal adaptive cardiac hypertrophy in response to pressure overload. Plays a role in osteogenesis. This is A-kinase anchor protein 13 from Mus musculus (Mouse).